A 325-amino-acid polypeptide reads, in one-letter code: Biotin synthase (325 aa).

Residues 49-267 form the Radical SAM core domain; sequence TQVQISTLLS…IAAARISMPR (219 aa). [4Fe-4S] cluster-binding residues include C64, C68, and C71. C108, C139, C199, and R271 together coordinate [2Fe-2S] cluster.

The protein belongs to the radical SAM superfamily. Biotin synthase family. In terms of assembly, homodimer. Requires [4Fe-4S] cluster as cofactor. [2Fe-2S] cluster serves as cofactor.

It catalyses the reaction (4R,5S)-dethiobiotin + (sulfur carrier)-SH + 2 reduced [2Fe-2S]-[ferredoxin] + 2 S-adenosyl-L-methionine = (sulfur carrier)-H + biotin + 2 5'-deoxyadenosine + 2 L-methionine + 2 oxidized [2Fe-2S]-[ferredoxin]. Its pathway is cofactor biosynthesis; biotin biosynthesis; biotin from 7,8-diaminononanoate: step 2/2. Its function is as follows. Catalyzes the conversion of dethiobiotin (DTB) to biotin by the insertion of a sulfur atom into dethiobiotin via a radical-based mechanism. The sequence is that of Biotin synthase from Acidiphilium cryptum (strain JF-5).